The chain runs to 659 residues: DNA ligase (659 aa).

NAD(+) contacts are provided by residues 32-36 (DAEYD), 81-82 (SL), and Glu110. Lys112 serves as the catalytic N6-AMP-lysine intermediate. Residues Arg133, Glu168, Lys284, and Lys308 each coordinate NAD(+). Zn(2+) is bound by residues Cys402, Cys405, Cys420, and Cys425. Residues 582-659 (AKPQIFAGKS…SEEEFAELLP (78 aa)) enclose the BRCT domain.

It belongs to the NAD-dependent DNA ligase family. LigA subfamily. Mg(2+) serves as cofactor. Mn(2+) is required as a cofactor.

It carries out the reaction NAD(+) + (deoxyribonucleotide)n-3'-hydroxyl + 5'-phospho-(deoxyribonucleotide)m = (deoxyribonucleotide)n+m + AMP + beta-nicotinamide D-nucleotide.. Its function is as follows. DNA ligase that catalyzes the formation of phosphodiester linkages between 5'-phosphoryl and 3'-hydroxyl groups in double-stranded DNA using NAD as a coenzyme and as the energy source for the reaction. It is essential for DNA replication and repair of damaged DNA. This is DNA ligase from Desulfitobacterium hafniense (strain Y51).